We begin with the raw amino-acid sequence, 149 residues long: Probable glycine-rich RNA-binding protein 1 (149 aa).

The region spanning 8 to 83 (YRCFVGGLAW…LDGRNITAQA (76 aa)) is the RRM domain. Residues 80 to 149 (TAQARGSGTR…GRSEGGSWRN (70 aa)) form a disordered region. Composition is skewed to gly residues over residues 87 to 101 (GTRG…SGGY), 110 to 123 (YNRG…GGYG), and 131 to 143 (YGDG…GRSE).

The protein belongs to the GR-RBP family.

Possibly has a role in RNA transcription or processing during stress. This chain is Probable glycine-rich RNA-binding protein 1 (RBG1), found in Arabidopsis thaliana (Mouse-ear cress).